The following is a 378-amino-acid chain: Putative zinc finger protein 302L (378 aa).

The C2H2-type; degenerate zinc finger occupies 3 to 25; sequence IVCEFCDKSFDSKSKVNAHQRTK.

This sequence belongs to the IIV-6 302L family.

In Invertebrate iridescent virus 6 (IIV-6), this protein is Putative zinc finger protein 302L.